We begin with the raw amino-acid sequence, 111 residues long: Large ribosomal subunit protein uL22 (111 aa).

It belongs to the universal ribosomal protein uL22 family. As to quaternary structure, part of the 50S ribosomal subunit.

This protein binds specifically to 23S rRNA; its binding is stimulated by other ribosomal proteins, e.g. L4, L17, and L20. It is important during the early stages of 50S assembly. It makes multiple contacts with different domains of the 23S rRNA in the assembled 50S subunit and ribosome. Its function is as follows. The globular domain of the protein is located near the polypeptide exit tunnel on the outside of the subunit, while an extended beta-hairpin is found that lines the wall of the exit tunnel in the center of the 70S ribosome. The polypeptide is Large ribosomal subunit protein uL22 (Clostridium acetobutylicum (strain ATCC 824 / DSM 792 / JCM 1419 / IAM 19013 / LMG 5710 / NBRC 13948 / NRRL B-527 / VKM B-1787 / 2291 / W)).